Consider the following 732-residue polypeptide: Elongation factor 2 (732 aa).

The tr-type G domain occupies 19–260 (ERIRNIGIAA…MVVRHLPSPI (242 aa)). GTP-binding positions include 28-35 (AHIDHGKT), 94-98 (DTPGH), and 148-151 (NKVD). Diphthamide is present on His597.

This sequence belongs to the TRAFAC class translation factor GTPase superfamily. Classic translation factor GTPase family. EF-G/EF-2 subfamily.

The protein resides in the cytoplasm. In terms of biological role, catalyzes the GTP-dependent ribosomal translocation step during translation elongation. During this step, the ribosome changes from the pre-translocational (PRE) to the post-translocational (POST) state as the newly formed A-site-bound peptidyl-tRNA and P-site-bound deacylated tRNA move to the P and E sites, respectively. Catalyzes the coordinated movement of the two tRNA molecules, the mRNA and conformational changes in the ribosome. This is Elongation factor 2 (fusA) from Pyrococcus horikoshii (strain ATCC 700860 / DSM 12428 / JCM 9974 / NBRC 100139 / OT-3).